Consider the following 349-residue polypeptide: Quinone oxidoreductase-like protein 2 (349 aa).

Lys-35 carries the N6-acetyllysine modification. Lys-200 is subject to N6-succinyllysine.

The protein belongs to the zinc-containing alcohol dehydrogenase family. Quinone oxidoreductase subfamily.

The chain is Quinone oxidoreductase-like protein 2 from Bos taurus (Bovine).